Consider the following 500-residue polypeptide: Protein O-glucosyltransferase 2 (500 aa).

The first 22 residues, 1-22, serve as a signal peptide directing secretion; that stretch reads MLRKLLLLLMSCIIFLTRRSKA. The Filamin repeat unit spans residues 23–128; sequence AAAASASKTL…LVGKSPYVLR (106 aa). Asparagine 60 and asparagine 259 each carry an N-linked (GlcNAc...) asparagine glycan. Positions 497–500 match the Prevents secretion from ER motif; sequence RDEL.

It belongs to the KDELC family.

The protein resides in the endoplasmic reticulum lumen. It catalyses the reaction L-seryl-[EGF-like domain protein] + UDP-alpha-D-glucose = 3-O-(beta-D-glucosyl)-L-seryl-[EGF-like domain protein] + UDP + H(+). The enzyme catalyses L-seryl-[EGF-like domain protein] + UDP-alpha-D-xylose = 3-O-(beta-D-xylosyl)-L-seryl-[EGF-like domain protein] + UDP + H(+). Its pathway is protein modification; protein glycosylation. Protein glucosyltransferase that catalyzes the transfer of glucose from UDP-glucose to a serine residue within the consensus sequence peptide C-X-N-T-X-G-S-F-X-C. Can also catalyze the transfer of xylose from UDP-xylose but less efficiently. The chain is Protein O-glucosyltransferase 2 (poglut2) from Danio rerio (Zebrafish).